The following is a 704-amino-acid chain: MARTTPIARYRNIGISAHIDAGKTTTTERILFYTGVNHKIGEVHDGAATMDWMEQEQERGITITSAATTAFWSGMAKQYEPHRINIIDTPGHVDFTIEVERSMRVLDGAVMVYCAVGGVQPQSETVWRQANKYKVPRIAFVNKMDRMGANFLKVVGQIKTRLGANPVPLQLAIGAEEGFTGVVDLVKMKAINWNDADQGVTFEYEDIPADMQDLADEWHQNLIESAAEASEELMEKYLGGEELTEEEIKKALRQRVLNNEIILVTCGSAFKNKGVQAMLDAVIDYLPSPVDVPAINGILDDGKDTPAERHASDEEPFSALAFKIATDPFVGNLTFFRVYSGVVNSGDTILNSVKSARERFGRIVQMHANKREEIKEVRAGDIAAAIGLKDVTTGDTLCNPDHPIILERMEFPEPVISIAVEPKTKADQEKMGLALGRLAKEDPSFRVWTDEESNQTIIAGMGELHLDIIVDRMKREFNVEANVGKPQVAYREAIRSKVTDIEGKHAKQSGGRGQYGHVVIDMYPLEPGSNPKGYEFINDIKGGVIPGEYIPAVDKGIQEQLKSGPLAGYPVVDIGIRLHFGSYHDVDSSELAFKLAASIAFKEGFKKAKPVLLEPIMKVEVETPEENTGDVIGDLSRRRGMLRGQESEVTGVKIHAEVPLSEMFGYATQLRSLTKGRASYTMEFLKYDDAPNNVAQAVIEARGK.

Residues 8-290 (ARYRNIGISA…AVIDYLPSPV (283 aa)) form the tr-type G domain. GTP-binding positions include 17-24 (AHIDAGKT), 88-92 (DTPGH), and 142-145 (NKMD).

It belongs to the TRAFAC class translation factor GTPase superfamily. Classic translation factor GTPase family. EF-G/EF-2 subfamily.

It is found in the cytoplasm. Catalyzes the GTP-dependent ribosomal translocation step during translation elongation. During this step, the ribosome changes from the pre-translocational (PRE) to the post-translocational (POST) state as the newly formed A-site-bound peptidyl-tRNA and P-site-bound deacylated tRNA move to the P and E sites, respectively. Catalyzes the coordinated movement of the two tRNA molecules, the mRNA and conformational changes in the ribosome. The polypeptide is Elongation factor G (Cronobacter sakazakii (strain ATCC BAA-894) (Enterobacter sakazakii)).